The sequence spans 744 residues: Catalase-peroxidase 3 (744 aa).

The segment at residues 106–228 is a cross-link (tryptophyl-tyrosyl-methioninium (Trp-Tyr) (with M-254)); that stretch reads WHFAGTYRIG…LAASEMGLIY (123 aa). His107 acts as the Proton acceptor in catalysis. Residues 228-254 constitute a cross-link (tryptophyl-tyrosyl-methioninium (Tyr-Met) (with W-106)); sequence YVDPQGPATLPDPLASARDIRETFRRM. Residue His269 participates in heme b binding.

The protein belongs to the peroxidase family. Peroxidase/catalase subfamily. As to quaternary structure, homodimer or homotetramer. Heme b is required as a cofactor. Post-translationally, formation of the three residue Trp-Tyr-Met cross-link is important for the catalase, but not the peroxidase activity of the enzyme.

It catalyses the reaction H2O2 + AH2 = A + 2 H2O. It carries out the reaction 2 H2O2 = O2 + 2 H2O. In terms of biological role, bifunctional enzyme with both catalase and broad-spectrum peroxidase activity. The protein is Catalase-peroxidase 3 of Mycolicibacterium smegmatis (strain ATCC 700084 / mc(2)155) (Mycobacterium smegmatis).